The primary structure comprises 157 residues: Transcriptional repressor NrdR (157 aa).

A zinc finger spans residues 3–34; that stretch reads CPHCHQNSSRVIDSRPTDEGRVIRRRRECENC. Positions 49-139 constitute an ATP-cone domain; sequence LLVIKKNGTR…VYRQFKDMNV (91 aa).

Belongs to the NrdR family. The cofactor is Zn(2+).

In terms of biological role, negatively regulates transcription of bacterial ribonucleotide reductase nrd genes and operons by binding to NrdR-boxes. The chain is Transcriptional repressor NrdR from Latilactobacillus sakei subsp. sakei (strain 23K) (Lactobacillus sakei subsp. sakei).